The primary structure comprises 1056 residues: Contactin-5 (1056 aa).

Low complexity predominate over residues 1 to 14; sequence MKADSSSSSSMSSR. Positions 1–33 are disordered; sequence MKADSSSSSSMSSRMRLRNSHGVGSSSQDWSPF. The span at 22–31 shows a compositional bias: polar residues; the sequence is GVGSSSQDWS. 6 consecutive Ig-like C2-type domains span residues 57–142, 154–240, 258–343, 348–432, 438–519, and 527–622; these read PVFI…IVLS, PFSG…RVLS, PKIE…GHLQ, PQWI…AELK, PMFN…AELT, and PMRV…AELL. Disulfide bonds link Cys81–Cys131, Cys175–Cys227, and Cys280–Cys327. Asn96 and Asn119 each carry an N-linked (GlcNAc...) asparagine glycan. Asn355 carries an N-linked (GlcNAc...) asparagine glycan. 3 disulfide bridges follow: Cys369–Cys416, Cys459–Cys507, and Cys549–Cys606. N-linked (GlcNAc...) asparagine glycans are attached at residues Asn489 and Asn496. 4 Fibronectin type-III domains span residues 629–727, 732–829, 834–928, and 933–1023; these read PPGV…TKEA, APAN…SAEG, PPSE…TKKN, and PPGN…TSSG. Positions 711-736 are disordered; sequence GTGDPSPPSRAVRTKEAVPSVAPANV. N-linked (GlcNAc...) asparagine glycosylation is found at Asn772, Asn887, Asn945, and Asn958. Residue Asn1035 is the site of GPI-anchor amidated asparagine attachment. The propeptide at 1036 to 1056 is removed in mature form; sequence SPPGLAWTALFLSLMVPSFPL.

Belongs to the immunoglobulin superfamily. Contactin family.

The protein resides in the cell membrane. Its function is as follows. Contactins mediate cell surface interactions during nervous system development. In Danio rerio (Zebrafish), this protein is Contactin-5 (cntn5).